The sequence spans 111 residues: MEAKAIGKTIRIAPRKVRLVVDLIRGKNVKEAQAILMFTPRGASPVIAKVLDSAIANRTHNLNLNLENLFVKEVWANESITMKRMLPRAKGSGHLIRKRTSHITVVVAERE.

Belongs to the universal ribosomal protein uL22 family. As to quaternary structure, part of the 50S ribosomal subunit.

Its function is as follows. This protein binds specifically to 23S rRNA; its binding is stimulated by other ribosomal proteins, e.g. L4, L17, and L20. It is important during the early stages of 50S assembly. It makes multiple contacts with different domains of the 23S rRNA in the assembled 50S subunit and ribosome. In terms of biological role, the globular domain of the protein is located near the polypeptide exit tunnel on the outside of the subunit, while an extended beta-hairpin is found that lines the wall of the exit tunnel in the center of the 70S ribosome. The protein is Large ribosomal subunit protein uL22 of Acholeplasma laidlawii.